A 206-amino-acid polypeptide reads, in one-letter code: Somatotropin (206 aa).

An N-terminal signal peptide occupies residues 1 to 22 (MAGLHFFPALLALLMASLQTHQ). 2 cysteine pairs are disulfide-bonded: Cys75-Cys179 and Cys196-Cys204.

The protein belongs to the somatotropin/prolactin family.

The protein resides in the secreted. Its function is as follows. Growth hormone plays an important role in growth control and is involved in the regulation of several anabolic processes. Implicated as an osmoregulatory substance important for seawater adaptation. The polypeptide is Somatotropin (gh) (Protopterus annectens (African lungfish)).